Reading from the N-terminus, the 997-residue chain is Protein translocase subunit SecA (997 aa).

ATP contacts are provided by residues glutamine 102, 120–124 (GEGKT), and aspartate 521. The interval 893–997 (PADASPNGVV…KYKKCHGAEA (105 aa)) is disordered. The segment covering 938–953 (AIEREFEKKKQQELSH) has biased composition (basic and acidic residues). Zn(2+) contacts are provided by cysteine 981, cysteine 983, cysteine 992, and histidine 993. Positions 987 to 997 (KKYKKCHGAEA) are enriched in basic residues.

The protein belongs to the SecA family. Monomer and homodimer. Part of the essential Sec protein translocation apparatus which comprises SecA, SecYEG and auxiliary proteins SecDF. Other proteins may also be involved. Zn(2+) serves as cofactor.

It localises to the cell inner membrane. Its subcellular location is the cytoplasm. The catalysed reaction is ATP + H2O + cellular proteinSide 1 = ADP + phosphate + cellular proteinSide 2.. Its function is as follows. Part of the Sec protein translocase complex. Interacts with the SecYEG preprotein conducting channel. Has a central role in coupling the hydrolysis of ATP to the transfer of proteins into and across the cell membrane, serving as an ATP-driven molecular motor driving the stepwise translocation of polypeptide chains across the membrane. This is Protein translocase subunit SecA from Acidobacterium capsulatum (strain ATCC 51196 / DSM 11244 / BCRC 80197 / JCM 7670 / NBRC 15755 / NCIMB 13165 / 161).